The sequence spans 1830 residues: Guanine nucleotide exchange factor SPIKE 1 (1830 aa).

The residue at position 1 (M1) is an N-acetylmethionine. A disordered region spans residues 285–304; it reads NTGESASPSSPLAPSMTASS. Positions 289–304 are enriched in low complexity; the sequence is SASPSSPLAPSMTASS. Positions 463 to 622 constitute a C2 DOCK-type domain; sequence FHCLYVYPVA…NIFKLRLRLC (160 aa). Position 1051 is a phosphoserine (S1051). Phosphothreonine is present on T1079. Residue S1095 is modified to Phosphoserine. A DOCKER domain is found at 1379–1828; the sequence is MAFAPVPDLH…LSHYIPAILS (450 aa).

Belongs to the DOCK family. Homodimer. Component of SCAR/WAVE and ARP2/3 complexes. Interacts directly with ARAC4/ROP2, ARAC1/ROP3, ARAC5/ROP4, ARAC6/ROP5, ARAC8/ROP10, ARAC9/ROP8, SCAR1, SCAR2, SCAR3, SCAR4, ABI1, ABI2, ABI3 and ABI4. Binds to the inactive GDP-bound form of ARAC3/ROP6. In terms of tissue distribution, expressed ubiquitously, in roots and aerial organs.

The protein resides in the cytoplasm. Its subcellular location is the endoplasmic reticulum membrane. It localises to the nucleus. Its function is as follows. Guanine nucleotide exchange factor (GEF) for Rho and Rac. GEF proteins activate small GTPases by exchanging bound GDP for free GTP. Controls actin polymerization via the two heteromeric complexes WAVE and actin-related protein (ARP) 2/3. Involved in cytoskeletal reorganization required for cell shape (e.g. trichome and cotyledon) control and tissue development. Prevents cortical microtubules organization into parallel arrays oriented perpendicular to the axis of cell elongation to limit anisotropic cell growth during petal development, probably by triggering ARAC4/ROP2 and ARAC3/ROP6 activity. Promotes polarized growth and cell-cell adhesion in the leaf epidermis probably by promoting the formation of endoplasmic reticulum (ER) exit site (ERES) and/or trafficking between the ER and Golgi. Triggers ARAC3/ROP6 activation required for auxin-mediated inhibition of PIN2 internalization during gravitropic responses (, PubMed:22683260). This is Guanine nucleotide exchange factor SPIKE 1 from Arabidopsis thaliana (Mouse-ear cress).